The sequence spans 558 residues: Dihydroxy-acid dehydratase (558 aa).

Residue aspartate 81 coordinates Mg(2+). Cysteine 122 lines the [2Fe-2S] cluster pocket. The Mg(2+) site is built by aspartate 123 and lysine 124. Lysine 124 is subject to N6-carboxylysine. Residue cysteine 195 coordinates [2Fe-2S] cluster. Mg(2+) is bound at residue glutamate 447. The active-site Proton acceptor is the serine 473.

This sequence belongs to the IlvD/Edd family. Homodimer. It depends on [2Fe-2S] cluster as a cofactor. Requires Mg(2+) as cofactor.

The catalysed reaction is (2R)-2,3-dihydroxy-3-methylbutanoate = 3-methyl-2-oxobutanoate + H2O. It carries out the reaction (2R,3R)-2,3-dihydroxy-3-methylpentanoate = (S)-3-methyl-2-oxopentanoate + H2O. It functions in the pathway amino-acid biosynthesis; L-isoleucine biosynthesis; L-isoleucine from 2-oxobutanoate: step 3/4. Its pathway is amino-acid biosynthesis; L-valine biosynthesis; L-valine from pyruvate: step 3/4. Functionally, functions in the biosynthesis of branched-chain amino acids. Catalyzes the dehydration of (2R,3R)-2,3-dihydroxy-3-methylpentanoate (2,3-dihydroxy-3-methylvalerate) into 2-oxo-3-methylpentanoate (2-oxo-3-methylvalerate) and of (2R)-2,3-dihydroxy-3-methylbutanoate (2,3-dihydroxyisovalerate) into 2-oxo-3-methylbutanoate (2-oxoisovalerate), the penultimate precursor to L-isoleucine and L-valine, respectively. This chain is Dihydroxy-acid dehydratase, found in Bacillus pumilus (strain SAFR-032).